The sequence spans 395 residues: Pyridinium-3,5-bisthiocarboxylic acid mononucleotide nickel insertion protein (395 aa).

The protein belongs to the LarC family.

It carries out the reaction Ni(II)-pyridinium-3,5-bisthiocarboxylate mononucleotide = pyridinium-3,5-bisthiocarboxylate mononucleotide + Ni(2+). Involved in the biosynthesis of a nickel-pincer cofactor ((SCS)Ni(II) pincer complex). Binds Ni(2+), and functions in nickel delivery to pyridinium-3,5-bisthiocarboxylic acid mononucleotide (P2TMN), to form the mature cofactor. Is thus probably required for the activation of nickel-pincer cofactor-dependent enzymes. The sequence is that of Pyridinium-3,5-bisthiocarboxylic acid mononucleotide nickel insertion protein from Staphylococcus epidermidis (strain ATCC 12228 / FDA PCI 1200).